A 314-amino-acid polypeptide reads, in one-letter code: tRNA dimethylallyltransferase (314 aa).

12-19 (GPTAGGKS) lines the ATP pocket. 14-19 (TAGGKS) serves as a coordination point for substrate. Positions 37–40 (DSMQ) are interaction with substrate tRNA.

The protein belongs to the IPP transferase family. In terms of assembly, monomer. Mg(2+) serves as cofactor.

The catalysed reaction is adenosine(37) in tRNA + dimethylallyl diphosphate = N(6)-dimethylallyladenosine(37) in tRNA + diphosphate. Its function is as follows. Catalyzes the transfer of a dimethylallyl group onto the adenine at position 37 in tRNAs that read codons beginning with uridine, leading to the formation of N6-(dimethylallyl)adenosine (i(6)A). This is tRNA dimethylallyltransferase from Rhodospirillum centenum (strain ATCC 51521 / SW).